The chain runs to 66 residues: Large ribosomal subunit protein bL33 (66 aa).

It belongs to the bacterial ribosomal protein bL33 family.

The protein is Large ribosomal subunit protein bL33 of Synechococcus sp. (strain CC9902).